The sequence spans 211 residues: 3-demethoxyubiquinol 3-hydroxylase (211 aa).

Fe cation-binding residues include E60, E90, H93, E142, E174, and H177.

Belongs to the COQ7 family. Requires Fe cation as cofactor.

The protein localises to the cell membrane. It catalyses the reaction a 5-methoxy-2-methyl-3-(all-trans-polyprenyl)benzene-1,4-diol + AH2 + O2 = a 3-demethylubiquinol + A + H2O. Its pathway is cofactor biosynthesis; ubiquinone biosynthesis. In terms of biological role, catalyzes the hydroxylation of 2-nonaprenyl-3-methyl-6-methoxy-1,4-benzoquinol during ubiquinone biosynthesis. The protein is 3-demethoxyubiquinol 3-hydroxylase of Acinetobacter baylyi (strain ATCC 33305 / BD413 / ADP1).